The following is a 174-amino-acid chain: Probable carboxylesterase Culp5 (174 aa).

Serine 67 acts as the Nucleophile in catalysis. Cysteine 137 and cysteine 144 are oxidised to a cystine. Aspartate 141 is a catalytic residue. Histidine 153 acts as the Proton donor/acceptor in catalysis.

It belongs to the cutinase family.

Does not exhibit cutinase activity. The chain is Probable carboxylesterase Culp5 from Mycobacterium tuberculosis (strain ATCC 25618 / H37Rv).